A 487-amino-acid chain; its full sequence is UDP-N-acetylmuramoyl-L-alanyl-D-glutamate--2,6-diaminopimelate ligase (487 aa).

2 residues coordinate UDP-N-acetyl-alpha-D-muramoyl-L-alanyl-D-glutamate: Leu23 and Ser25. Residue 108 to 114 (GTNGKTS) coordinates ATP. UDP-N-acetyl-alpha-D-muramoyl-L-alanyl-D-glutamate is bound by residues 150–151 (TT), Ser177, Gln183, and Arg185. N6-carboxylysine is present on Lys217. Meso-2,6-diaminopimelate-binding positions include Arg378, 402-405 (DNPR), Gly453, and Glu457. Residues 402–405 (DNPR) carry the Meso-diaminopimelate recognition motif motif.

It belongs to the MurCDEF family. MurE subfamily. Mg(2+) is required as a cofactor. In terms of processing, carboxylation is probably crucial for Mg(2+) binding and, consequently, for the gamma-phosphate positioning of ATP.

Its subcellular location is the cytoplasm. It carries out the reaction UDP-N-acetyl-alpha-D-muramoyl-L-alanyl-D-glutamate + meso-2,6-diaminopimelate + ATP = UDP-N-acetyl-alpha-D-muramoyl-L-alanyl-gamma-D-glutamyl-meso-2,6-diaminopimelate + ADP + phosphate + H(+). It participates in cell wall biogenesis; peptidoglycan biosynthesis. Functionally, catalyzes the addition of meso-diaminopimelic acid to the nucleotide precursor UDP-N-acetylmuramoyl-L-alanyl-D-glutamate (UMAG) in the biosynthesis of bacterial cell-wall peptidoglycan. In Ectopseudomonas mendocina (strain ymp) (Pseudomonas mendocina), this protein is UDP-N-acetylmuramoyl-L-alanyl-D-glutamate--2,6-diaminopimelate ligase.